The chain runs to 154 residues: Large ribosomal subunit protein uL13 (154 aa).

It belongs to the universal ribosomal protein uL13 family. In terms of assembly, part of the 50S ribosomal subunit.

This protein is one of the early assembly proteins of the 50S ribosomal subunit, although it is not seen to bind rRNA by itself. It is important during the early stages of 50S assembly. The protein is Large ribosomal subunit protein uL13 of Sinorhizobium medicae (strain WSM419) (Ensifer medicae).